A 1105-amino-acid polypeptide reads, in one-letter code: Mediator of RNA polymerase II transcription subunit 14 (1105 aa).

The segment at alanine 28–proline 48 is disordered.

This sequence belongs to the Mediator complex subunit 14 family. In terms of assembly, component of the Mediator complex.

The protein resides in the nucleus. Its function is as follows. Component of the Mediator complex, a coactivator involved in the regulated transcription of nearly all RNA polymerase II-dependent genes. Mediator functions as a bridge to convey information from gene-specific regulatory proteins to the basal RNA polymerase II transcription machinery. Mediator is recruited to promoters by direct interactions with regulatory proteins and serves as a scaffold for the assembly of a functional preinitiation complex with RNA polymerase II and the general transcription factors. This is Mediator of RNA polymerase II transcription subunit 14 (RGR1) from Coccidioides immitis (strain RS) (Valley fever fungus).